Reading from the N-terminus, the 160-residue chain is SsrA-binding protein (160 aa).

Belongs to the SmpB family.

It localises to the cytoplasm. Functionally, required for rescue of stalled ribosomes mediated by trans-translation. Binds to transfer-messenger RNA (tmRNA), required for stable association of tmRNA with ribosomes. tmRNA and SmpB together mimic tRNA shape, replacing the anticodon stem-loop with SmpB. tmRNA is encoded by the ssrA gene; the 2 termini fold to resemble tRNA(Ala) and it encodes a 'tag peptide', a short internal open reading frame. During trans-translation Ala-aminoacylated tmRNA acts like a tRNA, entering the A-site of stalled ribosomes, displacing the stalled mRNA. The ribosome then switches to translate the ORF on the tmRNA; the nascent peptide is terminated with the 'tag peptide' encoded by the tmRNA and targeted for degradation. The ribosome is freed to recommence translation, which seems to be the essential function of trans-translation. The polypeptide is SsrA-binding protein (Sodalis glossinidius (strain morsitans)).